The primary structure comprises 242 residues: UDP-2,3-diacylglucosamine hydrolase (242 aa).

Mn(2+)-binding residues include Asp-8, His-10, Asp-41, Asn-79, and His-114. 79 to 80 (NR) is a binding site for substrate. Residues Asp-122, Lys-164, Lys-167, and His-195 each coordinate substrate. His-195 and His-197 together coordinate Mn(2+).

Belongs to the LpxH family. Mn(2+) is required as a cofactor.

The protein resides in the cell inner membrane. It carries out the reaction UDP-2-N,3-O-bis[(3R)-3-hydroxytetradecanoyl]-alpha-D-glucosamine + H2O = 2-N,3-O-bis[(3R)-3-hydroxytetradecanoyl]-alpha-D-glucosaminyl 1-phosphate + UMP + 2 H(+). It functions in the pathway glycolipid biosynthesis; lipid IV(A) biosynthesis; lipid IV(A) from (3R)-3-hydroxytetradecanoyl-[acyl-carrier-protein] and UDP-N-acetyl-alpha-D-glucosamine: step 4/6. Hydrolyzes the pyrophosphate bond of UDP-2,3-diacylglucosamine to yield 2,3-diacylglucosamine 1-phosphate (lipid X) and UMP by catalyzing the attack of water at the alpha-P atom. Involved in the biosynthesis of lipid A, a phosphorylated glycolipid that anchors the lipopolysaccharide to the outer membrane of the cell. This is UDP-2,3-diacylglucosamine hydrolase from Vibrio cholerae serotype O1 (strain ATCC 39315 / El Tor Inaba N16961).